Reading from the N-terminus, the 405-residue chain is Maintenance of mitochondrial morphology protein 1 (405 aa).

The Lumenal segment spans residues 1–86 (MQVLNFYVNP…TGSTKSFTQG (86 aa)). Residues 87–107 (LIIGQLSVIILLGIFIKFFVF) traverse the membrane as a helical segment. Residues 108-405 (ADSSTTSSTS…QPVSTTESDH (298 aa)) lie on the Cytoplasmic side of the membrane. The region spanning 166–385 (APESLDWFNV…EPRFQVVKLP (220 aa)) is the SMP-LTD domain. The interval 303-324 (SEPRVAMDSPQSTRDDNSEEPN) is disordered.

It belongs to the MMM1 family. Homodimer. Component of the ER-mitochondria encounter structure (ERMES) or MDM complex, composed of MMM1, MDM10, MDM12 and MDM34. An MMM1 homodimer associates with one molecule of MDM12 on each side in a pairwise head-to-tail manner, and the SMP-LTD domains of MMM1 and MDM12 generate a continuous hydrophobic tunnel for phospholipid trafficking.

The protein localises to the endoplasmic reticulum membrane. In terms of biological role, component of the ERMES/MDM complex, which serves as a molecular tether to connect the endoplasmic reticulum (ER) and mitochondria. Components of this complex are involved in the control of mitochondrial shape and protein biogenesis, and function in nonvesicular lipid trafficking between the ER and mitochondria. The MDM12-MMM1 subcomplex functions in the major beta-barrel assembly pathway that is responsible for biogenesis of all outer membrane beta-barrel proteins, and acts in a late step after the SAM complex. The MDM10-MDM12-MMM1 subcomplex further acts in the TOM40-specific pathway after the action of the MDM12-MMM1 complex. Essential for establishing and maintaining the structure of mitochondria and maintenance of mtDNA nucleoids. This chain is Maintenance of mitochondrial morphology protein 1, found in Meyerozyma guilliermondii (strain ATCC 6260 / CBS 566 / DSM 6381 / JCM 1539 / NBRC 10279 / NRRL Y-324) (Yeast).